Consider the following 211-residue polypeptide: MSGTLVLVRHGQSEWNLKNLFTGWRDPDLTELGVEEAKAGGAALAEYGIKFDIAFTSVLVRAQRTCQMVLDAVGQSSLETICDQALNERDYGDLSGLNKDDARAKWGEEQVHIWRRSYDVPPPGGESLRDTGARVWPYYLTEILPRVLAGEKVLVAAHGNSLRSLVMVLDRLTKEQVLNLNLATGVPMVYKLKADSTVASKEVLGDMSAAH.

Residues 9–16 (RHGQSEWN), 22–23 (TG), Arg61, 88–91 (ERDY), Lys99, 115–116 (RR), and 159–160 (GN) contribute to the substrate site. His10 (tele-phosphohistidine intermediate) is an active-site residue. Glu88 (proton donor/acceptor) is an active-site residue.

The protein belongs to the phosphoglycerate mutase family. BPG-dependent PGAM subfamily. As to quaternary structure, homodimer.

It carries out the reaction (2R)-2-phosphoglycerate = (2R)-3-phosphoglycerate. Its pathway is carbohydrate degradation; glycolysis; pyruvate from D-glyceraldehyde 3-phosphate: step 3/5. In terms of biological role, catalyzes the interconversion of 2-phosphoglycerate and 3-phosphoglycerate. The chain is 2,3-bisphosphoglycerate-dependent phosphoglycerate mutase from Sinorhizobium fredii (strain NBRC 101917 / NGR234).